The sequence spans 116 residues: Protein Rev (116 aa).

A phosphoserine; by host CK2 mark is found at serine 5 and serine 8. The segment at 18 to 26 (IIKILYQSN) is homomultimerization. Residues 24–49 (QSNPHPSPEGTRQARRNRRRRWRERQ) form a disordered region. Positions 34-50 (TRQARRNRRRRWRERQR) match the Nuclear localization signal and RNA-binding (RRE) motif. Residues 36-47 (QARRNRRRRWRE) are compositionally biased toward basic residues. Positions 73–84 (LQLPPLDRLTLD) match the Nuclear export signal and binding to XPO1 motif. 2 positions are modified to phosphoserine; by host: serine 92 and serine 99.

It belongs to the HIV-1 REV protein family. As to quaternary structure, homomultimer; when bound to the RRE. Multimeric assembly is essential for activity and may involve XPO1. Binds to human KPNB1, XPO1, TNPO1, RANBP5 and IPO7. Interacts with the viral Integrase. Interacts with human KHDRBS1. Interacts with human NAP1; this interaction decreases Rev multimerization and stimulates its activity. Interacts with human DEAD-box helicases DDX3 and DDX24; these interactions may serve for viral RNA export to the cytoplasm and packaging, respectively. Interacts with human PSIP1; this interaction may inhibit HIV-1 DNA integration by promoting dissociation of the Integrase-LEDGF/p75 complex. Asymmetrically arginine dimethylated at one site by host PRMT6. Methylation impairs the RNA-binding activity and export of viral RNA from the nucleus to the cytoplasm. Post-translationally, phosphorylated by protein kinase CK2. Presence of, and maybe binding to the N-terminus of the regulatory beta subunit of CK2 is necessary for CK2-mediated Rev's phosphorylation.

Its subcellular location is the host nucleus. The protein resides in the host nucleolus. The protein localises to the host cytoplasm. Functionally, escorts unspliced or incompletely spliced viral pre-mRNAs (late transcripts) out of the nucleus of infected cells. These pre-mRNAs carry a recognition sequence called Rev responsive element (RRE) located in the env gene, that is not present in fully spliced viral mRNAs (early transcripts). This function is essential since most viral proteins are translated from unspliced or partially spliced pre-mRNAs which cannot exit the nucleus by the pathway used by fully processed cellular mRNAs. Rev itself is translated from a fully spliced mRNA that readily exits the nucleus. Rev's nuclear localization signal (NLS) binds directly to KPNB1/Importin beta-1 without previous binding to KPNA1/Importin alpha-1. KPNB1 binds to the GDP bound form of RAN (Ran-GDP) and targets Rev to the nucleus. In the nucleus, the conversion from Ran-GDP to Ran-GTP dissociates Rev from KPNB1 and allows Rev's binding to the RRE in viral pre-mRNAs. Rev multimerization on the RRE via cooperative assembly exposes its nuclear export signal (NES) to the surface. Rev can then form a complex with XPO1/CRM1 and Ran-GTP, leading to nuclear export of the complex. Conversion from Ran-GTP to Ran-GDP mediates dissociation of the Rev/RRE/XPO1/RAN complex, so that Rev can return to the nucleus for a subsequent round of export. Beside KPNB1, also seems to interact with TNPO1/Transportin-1, RANBP5/IPO5 and IPO7/RANBP7 for nuclear import. The nucleoporin-like HRB/RIP is an essential cofactor that probably indirectly interacts with Rev to release HIV RNAs from the perinuclear region to the cytoplasm. The polypeptide is Protein Rev (Human immunodeficiency virus type 1 group M subtype B (isolate SF33) (HIV-1)).